A 205-amino-acid chain; its full sequence is High frequency lysogenization protein HflD homolog (205 aa).

It belongs to the HflD family.

The protein localises to the cytoplasm. The protein resides in the cell inner membrane. In Haemophilus influenzae (strain 86-028NP), this protein is High frequency lysogenization protein HflD homolog.